We begin with the raw amino-acid sequence, 217 residues long: ATP-dependent Clp protease proteolytic subunit 2 (217 aa).

Ser-113 serves as the catalytic Nucleophile. His-138 is a catalytic residue.

This sequence belongs to the peptidase S14 family. Fourteen ClpP subunits assemble into 2 heptameric rings which stack back to back to give a disk-like structure with a central cavity, resembling the structure of eukaryotic proteasomes.

It is found in the cytoplasm. The enzyme catalyses Hydrolysis of proteins to small peptides in the presence of ATP and magnesium. alpha-casein is the usual test substrate. In the absence of ATP, only oligopeptides shorter than five residues are hydrolyzed (such as succinyl-Leu-Tyr-|-NHMec, and Leu-Tyr-Leu-|-Tyr-Trp, in which cleavage of the -Tyr-|-Leu- and -Tyr-|-Trp bonds also occurs).. In terms of biological role, cleaves peptides in various proteins in a process that requires ATP hydrolysis. Has a chymotrypsin-like activity. Plays a major role in the degradation of misfolded proteins. In Frankia casuarinae (strain DSM 45818 / CECT 9043 / HFP020203 / CcI3), this protein is ATP-dependent Clp protease proteolytic subunit 2.